The chain runs to 150 residues: Ribosome maturation factor RimP (150 aa).

The protein belongs to the RimP family.

It is found in the cytoplasm. Required for maturation of 30S ribosomal subunits. The sequence is that of Ribosome maturation factor RimP from Klebsiella pneumoniae (strain 342).